Here is a 406-residue protein sequence, read N- to C-terminus: UPF0761 membrane protein NMB0524 (406 aa).

6 helical membrane passes run 43–63 (LLAL…FPVF), 100–120 (LTAI…RTID), 139–159 (FLVY…GISF), 176–196 (WSGA…LWGL), 210–230 (AFVG…LFTW), and 248–268 (VPFF…GAVL).

It belongs to the UPF0761 family.

Its subcellular location is the cell inner membrane. In Neisseria meningitidis serogroup B (strain ATCC BAA-335 / MC58), this protein is UPF0761 membrane protein NMB0524.